We begin with the raw amino-acid sequence, 309 residues long: Malate dehydrogenase (309 aa).

NAD(+)-binding positions include 7-12 (GAGHVG) and Asp32. Arg81 and Arg87 together coordinate substrate. Residues Asn94 and 117–119 (VSN) contribute to the NAD(+) site. Residues Asn119 and Arg150 each coordinate substrate. His174 functions as the Proton acceptor in the catalytic mechanism.

Belongs to the LDH/MDH superfamily. MDH type 3 family.

The catalysed reaction is (S)-malate + NAD(+) = oxaloacetate + NADH + H(+). Catalyzes the reversible oxidation of malate to oxaloacetate. The chain is Malate dehydrogenase from Chlorobium phaeovibrioides (strain DSM 265 / 1930) (Prosthecochloris vibrioformis (strain DSM 265)).